The chain runs to 280 residues: Four and a half LIM domains protein 3 (280 aa).

At Ser2 the chain carries N-acetylserine. A C4-type zinc finger spans residues 7-31 (CAKCNESLYGRKYIQTDSGPYCVPC). LIM zinc-binding domains lie at 40-92 (CAEC…CNDC) and 101-153 (CSAC…CVPC). Lys157 is modified (N6-acetyllysine). LIM zinc-binding domains are found at residues 162–212 (CARC…CVAC) and 221–275 (CSSC…CQGC). Lys235 carries the N6-acetyllysine modification.

In terms of assembly, interacts with SOX15; the interaction recruits FHL3 to FOXK1 promoters where it acts as a transcriptional coactivator of FOXK1. In terms of tissue distribution, expressed only in skeletal muscle.

Its subcellular location is the nucleus. The protein localises to the cytoplasm. Its function is as follows. Recruited by SOX15 to FOXK1 promoters where it acts as a transcriptional coactivator of FOXK1. This is Four and a half LIM domains protein 3 (FHL3) from Homo sapiens (Human).